Consider the following 430-residue polypeptide: MIQIVTVRSGDSVYSLASKYGSTPDEIVKDNGLNPAETLVVGQALIVNTKGNNYYVQPGDSLYRISQTYNVPLASLAKVNNLSLKSILHVGQQLYVPKGTKRAVESIAYLQPSTIPIKESLVNATRAINPFLTYLAYFSFEAKRDGTLKEPTETAKIANIATQGKTIPMLVITNIENGNFSADLTSVILRDATIQNKFITNILQTAQKYGMRDIHFDFESVAPEDREAYNRFLRNVKTRLPSGYTLSTTLVPKTSSNQKGKFFEAHDYKAQGQIVDFVVNMTYDWGWQGGPPMAISPIGPVKEVLQYAKSQMPPQKIMMGQNLYGFDWKLPFKQGNPPAKAISSVAAVALARKYNVPIRYDFTAQAPHFNYFDENGVQHEVWFEDSRSVQSKFNLMKEQGIGGISYWKIGLPFPQNWRLLVENFTITKKG.

2 consecutive LysM domains span residues glutamine 3 to valine 47 and asparagine 52 to valine 96. In terms of domain architecture, GH18 spans valine 104 to glycine 430. The active-site Proton donor is the glutamate 219.

This sequence belongs to the glycosyl hydrolase 18 family. Chitinase class II subfamily.

Its subcellular location is the spore cortex. Inhibited by diethylpyrocarbonate. Its function is as follows. N-acetylglucosaminidase involved in cortex peptidoglycan degradation during germination. Cleaves only partially degraded spore peptidoglycans. Recognizes muramic acid delta-lactam residues specific to spore peptidoglycans. This is Cortical fragment-lytic enzyme from Bacillus cereus.